The following is a 976-amino-acid chain: Probable basic-leucine zipper transcription factor Q (976 aa).

2 coiled-coil regions span residues 57–110 and 136–287; these read AIDS…QYQQ and QQQQ…QQQQ. A disordered region spans residues 104–128; that stretch reads YQQQYQQPYTTPSPPDQIDYNQQLS. 2 stretches are compositionally biased toward polar residues: residues 374-385 and 393-411; these read TNFNGTNNSTPN and KLSS…SPPS. The segment at 374 to 499 is disordered; the sequence is TNFNGTNNST…PIDSNGDFDL (126 aa). Low complexity-rich tracts occupy residues 420 to 468 and 476 to 490; these read PKNN…FNNN and STTT…MTSP. One can recognise a bZIP domain in the interval 504-567; it reads EKKKSISRIN…GVEVMRPEPE (64 aa). Positions 505–507 are basic motif; the sequence is KKK. Residues 509–516 form a leucine-zipper region; it reads ISRINQNL. The span at 855 to 938 shows a compositional bias: low complexity; that stretch reads ENQSNNFGNN…VNSNNNNFNN (84 aa). Residues 855–957 form a disordered region; that stretch reads ENQSNNFGNN…SADAIPYPST (103 aa).

The protein belongs to the bZIP family.

It localises to the nucleus. Functionally, probable transcriptional regulator. In Dictyostelium discoideum (Social amoeba), this protein is Probable basic-leucine zipper transcription factor Q (bzpQ).